Reading from the N-terminus, the 490-residue chain is AP-5 complex subunit mu-1 (490 aa).

Positions 206–476 (KPQVSISITE…LISSDYYIWN (271 aa)) constitute an MHD domain.

It belongs to the adaptor complexes medium subunit family. In terms of assembly, probably part of the adaptor protein complex 5 (AP-5) a tetramer composed of AP5B1, AP5M1, AP5S1 and AP5Z1. Expressed in various tumor cell lines including Jurkat, Hep-G2 and HeLa.

The protein resides in the cytoplasm. It is found in the cytosol. It localises to the late endosome membrane. The protein localises to the lysosome membrane. Its function is as follows. As part of AP-5, a probable fifth adaptor protein complex it may be involved in endosomal transport. According to PubMed:18395520, it may play a role in cell death. This is AP-5 complex subunit mu-1 (AP5M1) from Homo sapiens (Human).